A 440-amino-acid polypeptide reads, in one-letter code: tRNA-2-methylthio-N(6)-dimethylallyladenosine synthase (440 aa).

The region spanning 4-122 is the MTTase N-terminal domain; the sequence is KSYYIITHGC…LPKILERVFE (119 aa). Residues C13, C49, C83, C159, C163, and C166 each coordinate [4Fe-4S] cluster. The region spanning 145–375 is the Radical SAM core domain; it reads REPGVRAWVT…IELQNGISLE (231 aa). The TRAM domain maps to 378–440; it reads KNEEGNIHEI…KLFHLEGVLV (63 aa).

This sequence belongs to the methylthiotransferase family. MiaB subfamily. As to quaternary structure, monomer. [4Fe-4S] cluster serves as cofactor.

The protein localises to the cytoplasm. The enzyme catalyses N(6)-dimethylallyladenosine(37) in tRNA + (sulfur carrier)-SH + AH2 + 2 S-adenosyl-L-methionine = 2-methylsulfanyl-N(6)-dimethylallyladenosine(37) in tRNA + (sulfur carrier)-H + 5'-deoxyadenosine + L-methionine + A + S-adenosyl-L-homocysteine + 2 H(+). In terms of biological role, catalyzes the methylthiolation of N6-(dimethylallyl)adenosine (i(6)A), leading to the formation of 2-methylthio-N6-(dimethylallyl)adenosine (ms(2)i(6)A) at position 37 in tRNAs that read codons beginning with uridine. The sequence is that of tRNA-2-methylthio-N(6)-dimethylallyladenosine synthase from Carboxydothermus hydrogenoformans (strain ATCC BAA-161 / DSM 6008 / Z-2901).